Reading from the N-terminus, the 366-residue chain is Putative agmatine deiminase (366 aa).

The active-site Amidino-cysteine intermediate is C357.

It belongs to the agmatine deiminase family.

The enzyme catalyses agmatine + H2O = N-carbamoylputrescine + NH4(+). The chain is Putative agmatine deiminase from Lactococcus lactis subsp. lactis (strain IL1403) (Streptococcus lactis).